The primary structure comprises 121 residues: MSITKDQIIEAVSAMSVMDVVELISAMEEKFGVSAAAAVAVAAGPAEAAEEKTEFDVILKAAGANKVAVIKAVRGATGLGLKEAKDLVESAPAALKEGVSKDDAEALKKSLEEAGAEVEVK.

This sequence belongs to the bacterial ribosomal protein bL12 family. As to quaternary structure, homodimer. Part of the ribosomal stalk of the 50S ribosomal subunit. Forms a multimeric L10(L12)X complex, where L10 forms an elongated spine to which 2 to 4 L12 dimers bind in a sequential fashion. Binds GTP-bound translation factors.

Forms part of the ribosomal stalk which helps the ribosome interact with GTP-bound translation factors. Is thus essential for accurate translation. In Salmonella agona (strain SL483), this protein is Large ribosomal subunit protein bL12.